Consider the following 228-residue polypeptide: 5'-methylthioadenosine/S-adenosylhomocysteine nucleosidase (228 aa).

Glutamate 11 functions as the Proton acceptor in the catalytic mechanism. Substrate is bound by residues glycine 77, isoleucine 151, and 172–173 (ME). Aspartate 196 functions as the Proton donor in the catalytic mechanism.

This sequence belongs to the PNP/UDP phosphorylase family. MtnN subfamily.

It catalyses the reaction S-adenosyl-L-homocysteine + H2O = S-(5-deoxy-D-ribos-5-yl)-L-homocysteine + adenine. It carries out the reaction S-methyl-5'-thioadenosine + H2O = 5-(methylsulfanyl)-D-ribose + adenine. The enzyme catalyses 5'-deoxyadenosine + H2O = 5-deoxy-D-ribose + adenine. It functions in the pathway amino-acid biosynthesis; L-methionine biosynthesis via salvage pathway; S-methyl-5-thio-alpha-D-ribose 1-phosphate from S-methyl-5'-thioadenosine (hydrolase route): step 1/2. In terms of biological role, catalyzes the irreversible cleavage of the glycosidic bond in both 5'-methylthioadenosine (MTA) and S-adenosylhomocysteine (SAH/AdoHcy) to adenine and the corresponding thioribose, 5'-methylthioribose and S-ribosylhomocysteine, respectively. Also cleaves 5'-deoxyadenosine, a toxic by-product of radical S-adenosylmethionine (SAM) enzymes, into 5-deoxyribose and adenine. The chain is 5'-methylthioadenosine/S-adenosylhomocysteine nucleosidase from Staphylococcus saprophyticus subsp. saprophyticus (strain ATCC 15305 / DSM 20229 / NCIMB 8711 / NCTC 7292 / S-41).